The following is a 152-amino-acid chain: Protein SprT-like (152 aa).

A SprT-like domain is found at 7–147 (QRLVEEVSLQ…CGKCKGKLKP (141 aa)). His-67 contributes to the Zn(2+) binding site. Glu-68 is a catalytic residue. Residue His-71 coordinates Zn(2+).

Belongs to the SprT family. The cofactor is Zn(2+).

It is found in the cytoplasm. The chain is Protein SprT-like from Bacillus cereus (strain G9842).